The chain runs to 121 residues: Large ribosomal subunit protein bL21c (121 aa).

It belongs to the bacterial ribosomal protein bL21 family. In terms of assembly, part of the 50S ribosomal subunit.

It localises to the plastid. The protein resides in the chloroplast. In terms of biological role, this protein binds to 23S rRNA. The sequence is that of Large ribosomal subunit protein bL21c from Chaetosphaeridium globosum (Charophycean green alga).